The following is a 191-amino-acid chain: Threonylcarbamoyl-AMP synthase (191 aa).

The YrdC-like domain occupies 7-191 (QSELNDALKI…FHASTGKRLR (185 aa)).

Belongs to the SUA5 family. TsaC subfamily.

It is found in the cytoplasm. It catalyses the reaction L-threonine + hydrogencarbonate + ATP = L-threonylcarbamoyladenylate + diphosphate + H2O. Required for the formation of a threonylcarbamoyl group on adenosine at position 37 (t(6)A37) in tRNAs that read codons beginning with adenine. Catalyzes the conversion of L-threonine, HCO(3)(-)/CO(2) and ATP to give threonylcarbamoyl-AMP (TC-AMP) as the acyladenylate intermediate, with the release of diphosphate. In Psychromonas ingrahamii (strain DSM 17664 / CCUG 51855 / 37), this protein is Threonylcarbamoyl-AMP synthase.